Here is a 469-residue protein sequence, read N- to C-terminus: Ribonuclease Y (469 aa).

The helical transmembrane segment at V6–I26 threads the bilayer. Residues F149–M209 form the KH domain. Positions V276–S369 constitute an HD domain.

The protein belongs to the RNase Y family.

It is found in the cell membrane. In terms of biological role, endoribonuclease that initiates mRNA decay. The sequence is that of Ribonuclease Y from Malacoplasma penetrans (strain HF-2) (Mycoplasma penetrans).